A 454-amino-acid polypeptide reads, in one-letter code: NADH-quinone oxidoreductase subunit H (454 aa).

Transmembrane regions (helical) follow at residues 18 to 38, 88 to 108, 131 to 151, 172 to 192, 206 to 226, 256 to 276, 296 to 316, 328 to 348, and 360 to 380; these read WWLVVVKAVFCFAFLMITVLF, VVYVLAPIVAAIPAFMAIAVI, LPIAMLYILAVASVGIYGIVL, MISYEIAMGAAFASVFLYSGS, WYIVLLPVSFVIYIVTMVGET, FMLAEYVNMVTVSAVSTTLFL, WWPMLWFVVKVQLLLFFFIWL, LMKLGWKVLIPVSVVWLMLVA, and FADIALYVGGGVLVLLLLSFV. The segment at 395-454 is disordered; that stretch reads AEEPAAFDPMAGGFPVPPLPGQTLPPVPRRRPRRDRELIVSGGPDTASDGPANGKEASDG. The span at 409-421 shows a compositional bias: pro residues; sequence PVPPLPGQTLPPV.

The protein belongs to the complex I subunit 1 family. As to quaternary structure, NDH-1 is composed of 14 different subunits. Subunits NuoA, H, J, K, L, M, N constitute the membrane sector of the complex.

It is found in the cell membrane. It catalyses the reaction a quinone + NADH + 5 H(+)(in) = a quinol + NAD(+) + 4 H(+)(out). Functionally, NDH-1 shuttles electrons from NADH, via FMN and iron-sulfur (Fe-S) centers, to quinones in the respiratory chain. The immediate electron acceptor for the enzyme in this species is believed to be ubiquinone. Couples the redox reaction to proton translocation (for every two electrons transferred, four hydrogen ions are translocated across the cytoplasmic membrane), and thus conserves the redox energy in a proton gradient. This subunit may bind ubiquinone. The sequence is that of NADH-quinone oxidoreductase subunit H from Streptomyces avermitilis (strain ATCC 31267 / DSM 46492 / JCM 5070 / NBRC 14893 / NCIMB 12804 / NRRL 8165 / MA-4680).